Reading from the N-terminus, the 290-residue chain is uncharacterized protein (290 aa).

Positions 67-210 (LPAAPEAPGD…QPSPKNPTKS (144 aa)) are disordered. The segment covering 121 to 130 (RPQETQEGHR) has biased composition (basic and acidic residues). Over residues 181–190 (AAQAAAAATA) the composition is skewed to low complexity. Over residues 191–200 (NPGSQTQTPL) the composition is skewed to polar residues.

This is an uncharacterized protein from Homo sapiens (Human).